The chain runs to 259 residues: Large ribosomal subunit protein uL3c (259 aa).

The N-terminal 37 residues, 1 to 37 (LKTTPLTLRSPFLHRLPLRALKTHKPTSLHISKSSIS), are a transit peptide targeting the chloroplast. The tract at residues 176–211 (MTHGSKSHRQLGSIGAGTTPGRVYKGKKMPGRMGGT) is disordered. Residues 199–211 (YKGKKMPGRMGGT) show a composition bias toward basic residues.

Belongs to the universal ribosomal protein uL3 family. In terms of assembly, part of the 50S ribosomal subunit.

The protein localises to the plastid. The protein resides in the chloroplast. In terms of biological role, one of the primary rRNA binding proteins, it binds directly near the 3'-end of the 23S rRNA, where it nucleates assembly of the 50S subunit. This Nicotiana tabacum (Common tobacco) protein is Large ribosomal subunit protein uL3c (RPL3).